The chain runs to 180 residues: NAD(P)H-quinone oxidoreductase subunit I, chloroplastic (180 aa).

4Fe-4S ferredoxin-type domains follow at residues Gly55–Arg84 and Leu95–Glu124. [4Fe-4S] cluster contacts are provided by Cys64, Cys67, Cys70, Cys74, Cys104, Cys107, Cys110, and Cys114.

The protein belongs to the complex I 23 kDa subunit family. In terms of assembly, NDH is composed of at least 16 different subunits, 5 of which are encoded in the nucleus. The cofactor is [4Fe-4S] cluster.

The protein localises to the plastid. The protein resides in the chloroplast thylakoid membrane. It carries out the reaction a plastoquinone + NADH + (n+1) H(+)(in) = a plastoquinol + NAD(+) + n H(+)(out). It catalyses the reaction a plastoquinone + NADPH + (n+1) H(+)(in) = a plastoquinol + NADP(+) + n H(+)(out). NDH shuttles electrons from NAD(P)H:plastoquinone, via FMN and iron-sulfur (Fe-S) centers, to quinones in the photosynthetic chain and possibly in a chloroplast respiratory chain. The immediate electron acceptor for the enzyme in this species is believed to be plastoquinone. Couples the redox reaction to proton translocation, and thus conserves the redox energy in a proton gradient. The protein is NAD(P)H-quinone oxidoreductase subunit I, chloroplastic of Triticum aestivum (Wheat).